The sequence spans 32 residues: Islet amyloid polypeptide (32 aa).

It belongs to the calcitonin family. Can form homodimers. Interacts with IDE and INS. Interaction with INS inhibits homodimerization and fibril formation.

The protein resides in the secreted. Amylin/IAPP is a glucoregulatory peptide hormone that plays an important role in the regulation of energy homeostasis. Selectively inhibits insulin-stimulated glucose utilization and glycogen deposition in muscle, while not affecting adipocyte glucose metabolism. IAPP function is mediated by the CALCR-RAMPs (AMYRs) receptor complexes. Amylin can also bind CALCR receptor in the absence of RAMPs, although it is more selective for AMYRs. This Saguinus oedipus (Cotton-top tamarin) protein is Islet amyloid polypeptide (IAPP).